Here is an 80-residue protein sequence, read N- to C-terminus: ATP synthase subunit c (80 aa).

The next 2 helical transmembrane spans lie at 11–31 and 53–73; these read MAAA…IGIL and FFVV…LGLY.

Belongs to the ATPase C chain family. F-type ATPases have 2 components, F(1) - the catalytic core - and F(0) - the membrane proton channel. F(1) has five subunits: alpha(3), beta(3), gamma(1), delta(1), epsilon(1). F(0) has three main subunits: a(1), b(2) and c(10-14). The alpha and beta chains form an alternating ring which encloses part of the gamma chain. F(1) is attached to F(0) by a central stalk formed by the gamma and epsilon chains, while a peripheral stalk is formed by the delta and b chains.

The protein resides in the cell inner membrane. Functionally, f(1)F(0) ATP synthase produces ATP from ADP in the presence of a proton or sodium gradient. F-type ATPases consist of two structural domains, F(1) containing the extramembraneous catalytic core and F(0) containing the membrane proton channel, linked together by a central stalk and a peripheral stalk. During catalysis, ATP synthesis in the catalytic domain of F(1) is coupled via a rotary mechanism of the central stalk subunits to proton translocation. In terms of biological role, key component of the F(0) channel; it plays a direct role in translocation across the membrane. A homomeric c-ring of between 10-14 subunits forms the central stalk rotor element with the F(1) delta and epsilon subunits. The polypeptide is ATP synthase subunit c (Erwinia tasmaniensis (strain DSM 17950 / CFBP 7177 / CIP 109463 / NCPPB 4357 / Et1/99)).